The sequence spans 552 residues: Membrane protein insertase YidC (552 aa).

A run of 5 helical transmembrane segments spans residues 7–24, 364–384, 434–454, 473–493, and 508–528; these read VLWV…DNWQ, WGWA…PLSA, LPVV…LASV, PFFI…SLNP, and PIAF…YYVV.

This sequence belongs to the OXA1/ALB3/YidC family. Type 1 subfamily. Interacts with the Sec translocase complex via SecD. Specifically interacts with transmembrane segments of nascent integral membrane proteins during membrane integration.

The protein resides in the cell inner membrane. In terms of biological role, required for the insertion and/or proper folding and/or complex formation of integral membrane proteins into the membrane. Involved in integration of membrane proteins that insert both dependently and independently of the Sec translocase complex, as well as at least some lipoproteins. Aids folding of multispanning membrane proteins. This is Membrane protein insertase YidC from Burkholderia cenocepacia (strain ATCC BAA-245 / DSM 16553 / LMG 16656 / NCTC 13227 / J2315 / CF5610) (Burkholderia cepacia (strain J2315)).